The sequence spans 220 residues: Charged multivesicular body protein 2a (220 aa).

Positions 12-53 (EEMLRQNQRALNRAMRDLDRERQRLEQQEKKIIADIKKMAKQ) form a coiled coil. The segment at 184-220 (ATGGSLSVAAGKKAEPQPTLADADADLEERLNNLRRD) is disordered. The MIT-interacting motif signature appears at 208 to 218 (ADLEERLNNLR). Residues 211 to 220 (EERLNNLRRD) show a composition bias toward basic and acidic residues.

This sequence belongs to the SNF7 family. In terms of assembly, probable core component of the endosomal sorting required for transport complex III (ESCRT-III). ESCRT-III components are thought to multimerize to form a flat lattice on the perimeter membrane of the endosome.

The protein localises to the late endosome membrane. The protein resides in the cytoplasm. Probable core component of the endosomal sorting required for transport complex III (ESCRT-III) which is involved in multivesicular bodies (MVBs) formation and sorting of endosomal cargo proteins into MVBs. MVBs contain intraluminal vesicles (ILVs) that are generated by invagination and scission from the limiting membrane of the endosome and mostly are delivered to lysosomes enabling degradation of membrane proteins, such as stimulated growth factor receptors, lysosomal enzymes and lipids. The chain is Charged multivesicular body protein 2a (chmp2a) from Danio rerio (Zebrafish).